The following is a 154-amino-acid chain: uncharacterized protein (154 aa).

A run of 2 helical transmembrane segments spans residues 54 to 74 (FLIT…IYLL) and 81 to 101 (FAFV…FFLS).

Its subcellular location is the cell membrane. This is an uncharacterized protein from Mycoplasma genitalium (strain ATCC 33530 / DSM 19775 / NCTC 10195 / G37) (Mycoplasmoides genitalium).